Consider the following 421-residue polypeptide: 4-hydroxy-3-methylbut-2-en-1-yl diphosphate synthase (flavodoxin) (421 aa).

[4Fe-4S] cluster is bound by residues Cys-311, Cys-314, Cys-357, and Glu-364.

Belongs to the IspG family. Requires [4Fe-4S] cluster as cofactor.

The enzyme catalyses (2E)-4-hydroxy-3-methylbut-2-enyl diphosphate + oxidized [flavodoxin] + H2O + 2 H(+) = 2-C-methyl-D-erythritol 2,4-cyclic diphosphate + reduced [flavodoxin]. Its pathway is isoprenoid biosynthesis; isopentenyl diphosphate biosynthesis via DXP pathway; isopentenyl diphosphate from 1-deoxy-D-xylulose 5-phosphate: step 5/6. Functionally, converts 2C-methyl-D-erythritol 2,4-cyclodiphosphate (ME-2,4cPP) into 1-hydroxy-2-methyl-2-(E)-butenyl 4-diphosphate. The sequence is that of 4-hydroxy-3-methylbut-2-en-1-yl diphosphate synthase (flavodoxin) from Xanthomonas axonopodis pv. citri (strain 306).